Here is a 112-residue protein sequence, read N- to C-terminus: T cell receptor alpha variable 41 (112 aa).

The signal sequence occupies residues 1 to 21; the sequence is MVKIRQFLLAILWLQLSCVSA. Positions 24 to 112 constitute an Ig-like domain; it reads NEVEQSPQNL…DSAVYICAVR (89 aa). N-linked (GlcNAc...) asparagine glycosylation is found at N32 and N44. C45 and C109 are joined by a disulfide.

In terms of assembly, alpha-beta TR is a heterodimer composed of an alpha and beta chain; disulfide-linked. The alpha-beta TR is associated with the transmembrane signaling CD3 coreceptor proteins to form the TR-CD3 (TcR or TCR). The assembly of alpha-beta TR heterodimers with CD3 occurs in the endoplasmic reticulum where a single alpha-beta TR heterodimer associates with one CD3D-CD3E heterodimer, one CD3G-CD3E heterodimer and one CD247 homodimer forming a stable octameric structure. CD3D-CD3E and CD3G-CD3E heterodimers preferentially associate with TR alpha and TR beta chains, respectively. The association of the CD247 homodimer is the last step of TcR assembly in the endoplasmic reticulum and is required for transport to the cell surface.

Its subcellular location is the cell membrane. V region of the variable domain of T cell receptor (TR) alpha chain that participates in the antigen recognition. Alpha-beta T cell receptors are antigen specific receptors which are essential to the immune response and are present on the cell surface of T lymphocytes. Recognize peptide-major histocompatibility (MH) (pMH) complexes that are displayed by antigen presenting cells (APC), a prerequisite for efficient T cell adaptive immunity against pathogens. Binding of alpha-beta TR to pMH complex initiates TR-CD3 clustering on the cell surface and intracellular activation of LCK that phosphorylates the ITAM motifs of CD3G, CD3D, CD3E and CD247 enabling the recruitment of ZAP70. In turn ZAP70 phosphorylates LAT, which recruits numerous signaling molecules to form the LAT signalosome. The LAT signalosome propagates signal branching to three major signaling pathways, the calcium, the mitogen-activated protein kinase (MAPK) kinase and the nuclear factor NF-kappa-B (NF-kB) pathways, leading to the mobilization of transcription factors that are critical for gene expression and essential for T cell growth and differentiation. The T cell repertoire is generated in the thymus, by V-(D)-J rearrangement. This repertoire is then shaped by intrathymic selection events to generate a peripheral T cell pool of self-MH restricted, non-autoaggressive T cells. Post-thymic interaction of alpha-beta TR with the pMH complexes shapes TR structural and functional avidity. The polypeptide is T cell receptor alpha variable 41 (Homo sapiens (Human)).